Here is a 31-residue protein sequence, read N- to C-terminus: Photosystem I reaction center subunit XII (31 aa).

Residues 7–26 (QVYIALLTALIPAFFALKLG) traverse the membrane as a helical segment.

Belongs to the PsaM family.

Its subcellular location is the plastid. The protein resides in the chloroplast thylakoid membrane. This Euglena viridis (Cercaria viridis) protein is Photosystem I reaction center subunit XII.